The primary structure comprises 56 residues: Large ribosomal subunit protein bL32 (56 aa).

A disordered region spans residues 1-26 (MAVQQNKKSRSKRGMRRSHDALSTAQ). The span at 7–16 (KKSRSKRGMR) shows a compositional bias: basic residues.

It belongs to the bacterial ribosomal protein bL32 family.

This Shewanella denitrificans (strain OS217 / ATCC BAA-1090 / DSM 15013) protein is Large ribosomal subunit protein bL32.